Here is a 317-residue protein sequence, read N- to C-terminus: Transaldolase (317 aa).

The active-site Schiff-base intermediate with substrate is the Lys-132.

This sequence belongs to the transaldolase family. Type 1 subfamily. Homodimer.

It is found in the cytoplasm. The catalysed reaction is D-sedoheptulose 7-phosphate + D-glyceraldehyde 3-phosphate = D-erythrose 4-phosphate + beta-D-fructose 6-phosphate. Its pathway is carbohydrate degradation; pentose phosphate pathway; D-glyceraldehyde 3-phosphate and beta-D-fructose 6-phosphate from D-ribose 5-phosphate and D-xylulose 5-phosphate (non-oxidative stage): step 2/3. Transaldolase is important for the balance of metabolites in the pentose-phosphate pathway. The sequence is that of Transaldolase from Photorhabdus laumondii subsp. laumondii (strain DSM 15139 / CIP 105565 / TT01) (Photorhabdus luminescens subsp. laumondii).